A 206-amino-acid chain; its full sequence is Large ribosomal subunit protein uL4 (206 aa).

Belongs to the universal ribosomal protein uL4 family. As to quaternary structure, part of the 50S ribosomal subunit.

Its function is as follows. One of the primary rRNA binding proteins, this protein initially binds near the 5'-end of the 23S rRNA. It is important during the early stages of 50S assembly. It makes multiple contacts with different domains of the 23S rRNA in the assembled 50S subunit and ribosome. Forms part of the polypeptide exit tunnel. This is Large ribosomal subunit protein uL4 from Cereibacter sphaeroides (strain ATCC 17025 / ATH 2.4.3) (Rhodobacter sphaeroides).